A 375-amino-acid polypeptide reads, in one-letter code: Queuine tRNA-ribosyltransferase (375 aa).

The active-site Proton acceptor is the Asp89. Substrate-binding positions include 89 to 93, Asp143, Gln187, and Gly214; that span reads DSGGF. The interval 245–251 is RNA binding; the sequence is GVGKPED. The active-site Nucleophile is the Asp264. The tract at residues 269 to 273 is RNA binding; important for wobble base 34 recognition; sequence TRNAR. Positions 302, 304, 307, and 333 each coordinate Zn(2+).

Belongs to the queuine tRNA-ribosyltransferase family. As to quaternary structure, homodimer. Within each dimer, one monomer is responsible for RNA recognition and catalysis, while the other monomer binds to the replacement base PreQ1. It depends on Zn(2+) as a cofactor.

The enzyme catalyses 7-aminomethyl-7-carbaguanine + guanosine(34) in tRNA = 7-aminomethyl-7-carbaguanosine(34) in tRNA + guanine. Its pathway is tRNA modification; tRNA-queuosine biosynthesis. In terms of biological role, catalyzes the base-exchange of a guanine (G) residue with the queuine precursor 7-aminomethyl-7-deazaguanine (PreQ1) at position 34 (anticodon wobble position) in tRNAs with GU(N) anticodons (tRNA-Asp, -Asn, -His and -Tyr). Catalysis occurs through a double-displacement mechanism. The nucleophile active site attacks the C1' of nucleotide 34 to detach the guanine base from the RNA, forming a covalent enzyme-RNA intermediate. The proton acceptor active site deprotonates the incoming PreQ1, allowing a nucleophilic attack on the C1' of the ribose to form the product. After dissociation, two additional enzymatic reactions on the tRNA convert PreQ1 to queuine (Q), resulting in the hypermodified nucleoside queuosine (7-(((4,5-cis-dihydroxy-2-cyclopenten-1-yl)amino)methyl)-7-deazaguanosine). The sequence is that of Queuine tRNA-ribosyltransferase from Photobacterium profundum (strain SS9).